A 264-amino-acid chain; its full sequence is Probable septum site-determining protein MinC (264 aa).

Positions 103 to 147 are disordered; sequence SHGRRPRGGNDAKDADRNDAQDAQGAPEHAQAAEAPASTSAIPPA. A compositionally biased stretch (basic and acidic residues) spans 110-122; that stretch reads GGNDAKDADRNDA. The segment covering 124-147 has biased composition (low complexity); it reads DAQGAPEHAQAAEAPASTSAIPPA.

Belongs to the MinC family. As to quaternary structure, interacts with MinD and FtsZ.

Cell division inhibitor that blocks the formation of polar Z ring septums. Rapidly oscillates between the poles of the cell to destabilize FtsZ filaments that have formed before they mature into polar Z rings. Prevents FtsZ polymerization. This Ralstonia pickettii (strain 12J) protein is Probable septum site-determining protein MinC.